A 393-amino-acid chain; its full sequence is uncharacterized protein (393 aa).

[4Fe-4S] cluster is bound by residues cysteine 9, cysteine 15, cysteine 18, and cysteine 97. S-adenosyl-L-methionine is bound by residues glutamine 231, tyrosine 258, glutamate 279, and aspartate 325. Cysteine 352 (nucleophile) is an active-site residue.

It belongs to the class I-like SAM-binding methyltransferase superfamily. RNA M5U methyltransferase family.

This is an uncharacterized protein from Leptospira interrogans serogroup Icterohaemorrhagiae serovar Lai (strain 56601).